The sequence spans 228 residues: Putative N-acetylmannosamine-6-phosphate 2-epimerase (228 aa).

The protein belongs to the NanE family.

The enzyme catalyses an N-acyl-D-glucosamine 6-phosphate = an N-acyl-D-mannosamine 6-phosphate. It functions in the pathway amino-sugar metabolism; N-acetylneuraminate degradation; D-fructose 6-phosphate from N-acetylneuraminate: step 3/5. Its function is as follows. Converts N-acetylmannosamine-6-phosphate (ManNAc-6-P) to N-acetylglucosamine-6-phosphate (GlcNAc-6-P). The protein is Putative N-acetylmannosamine-6-phosphate 2-epimerase of Mycoplasmopsis pulmonis (strain UAB CTIP) (Mycoplasma pulmonis).